The following is a 137-amino-acid chain: Competence protein D (137 aa).

Its function is as follows. Involved in transformation (genetic competence for DNA uptake). This chain is Competence protein D (comD), found in Haemophilus influenzae (strain ATCC 51907 / DSM 11121 / KW20 / Rd).